We begin with the raw amino-acid sequence, 235 residues long: U1 small nuclear ribonucleoprotein C (235 aa).

The Matrin-type zinc-finger motif lies at 4-36; the sequence is YYCEYCDIYLTHSSPVGRRQHIHGRKHISAKIE. The disordered stretch occupies residues 131 to 235; sequence QAHNNYSYPN…SKEHIESDIS (105 aa). Residues 134-168 show a composition bias toward low complexity; that stretch reads NNYSYPNSINPSNQINYSNNYGSNNFNNSNEFNKN. Basic and acidic residues predominate over residues 169 to 189; it reads MNEKDNINNNDIHDNKVKTDE. The segment covering 192-203 has biased composition (low complexity); sequence PINNDNLNNTRN. Basic and acidic residues-rich tracts occupy residues 205-217 and 225-235; these read SYEE…DHKK and NSKEHIESDIS.

Belongs to the U1 small nuclear ribonucleoprotein C family. U1 snRNP is composed of the 7 core Sm proteins B/B', D1, D2, D3, E, F and G that assemble in a heptameric protein ring on the Sm site of the small nuclear RNA to form the core snRNP, and at least 3 U1 snRNP-specific proteins U1-70K, U1-A and U1-C. U1-C interacts with U1 snRNA and the 5' splice-site region of the pre-mRNA.

The protein localises to the nucleus. Functionally, component of the spliceosomal U1 snRNP, which is essential for recognition of the pre-mRNA 5' splice-site and the subsequent assembly of the spliceosome. U1-C is directly involved in initial 5' splice-site recognition for both constitutive and regulated alternative splicing. The interaction with the 5' splice-site seems to precede base-pairing between the pre-mRNA and the U1 snRNA. Stimulates commitment or early (E) complex formation by stabilizing the base pairing of the 5' end of the U1 snRNA and the 5' splice-site region. The sequence is that of U1 small nuclear ribonucleoprotein C from Plasmodium falciparum (isolate 3D7).